A 1409-amino-acid chain; its full sequence is MKALLDLFKQVTQEEEFDAIKIALASPEKIRSWSYGEVKKPETINYRTFKPERDGLFCAKIFGPIKDYECLCGKYKRLKHRGVICEKCGVEVTLSKVRRERMAHIELASPVAHIWFLKSLPSRLGMVLDIALRDIERVLYFEAYIVIDPGMTPLTRGQLLTEDDYLSKVEEYGDEFNAVMGAEAVRELLRTMDIHTEIEKLRRELGETGSEAKIKKIAKRLKVLEAFQKSGIKPEWMILEVLPVLPPELRPLVPLDGGRFATSDLNDLYRRVINRNNRLKRLLELKAPEIIVRNEKRMLQEAVDSLLDNGRRGKVMTGANKRPLKSLADMIKGKGGRFRQNLLGKRVDYSGRSVIVVGPQLKLHQCGLPKKMALELFKPFIFHKLEVLGLATTIKAAKKKVEEEGPEVWDILEDVIREHPVLLNRAPTLHRLGIQAFEPTLVEGKAIQLHPLVCAAFNADFDGDQMAVHVPLSLEAQMEARTLMLASNNVLSPANGEPIIVPSQDIVLGLYYMTREKKAARGEGMRFANVAEVQRAYDSGQVDLHARITVRLREFDVEVDGQKREKITRYETTVGRALLSEILPAGLPFSVIDKALKKKEISRLINASFRRVGIRETVIFADKLMYTGYTYATKAGISISINDMLVPPEKEQLIASAEAEVKEIEDQYVSGLVTQGERYNKVVDIWGRAGDKVADAMMKQLREEVVLDANGEVAKDAEGNPIKQESFNAIYMMADSGARGSAAQVRQLAGMRGLMAKPDGSIIETPITANFRDGLNVLQYFISTHGARKGLADTALKTANSGYLTRRLVDVTQDLVVTEHDCGTTEGLYTKALVKGGEVVEPLHDRILGRVAALDVLNPETQEVVYPAGTLLTEDEVEHIDALGIDEVKVRTALTCETRYGICAKCYGRDLGRGKLINMGEAVGVIAAQSIGEPGTQLTMRTFHIGGAVSRAASVSQVESKSNGIVHFTSTMRYVTNARGEQVVISRNGEAIIQDENGRERERHKVPYGATLQITDGKPVKAGQALATWDPHTRPIITEYAGRVKFENVEEGVTVAKQVDEVTGLSSLVVIDPKQRAGQSKGLRPQVKLLDANGVEVKVAGGEAPVSVTFQLGCIITVKDGQEVGVGEVLARIPQESSKTRDITGGLPRVAELFEARSPKDAGLLAEVTGTISFGKDTKGKQRLVITDLDGVSHEFLIPKDKHVTAHDGQVVTKGESIVDGPADPQDILRLQGREALARYIIDEVQDVYRLQGVKINDKHIEVIVRQMLRRVRITDAGDTSFILGEQVERADVLTENERVLAQDGRPASFEYVLLGITKASLSTDSFISAASFQETTRVLTEAAILGKRDELRGLKENVIVGRLIPAGTGLAYHETRKRNVAGVDSAPAIIEDAGNVQLEETSGNPEVA.

Positions 70, 72, 85, and 88 each coordinate Zn(2+). Asp-460, Asp-462, and Asp-464 together coordinate Mg(2+). The Zn(2+) site is built by Cys-822, Cys-896, Cys-903, and Cys-906.

It belongs to the RNA polymerase beta' chain family. As to quaternary structure, the RNAP catalytic core consists of 2 alpha, 1 beta, 1 beta' and 1 omega subunit. When a sigma factor is associated with the core the holoenzyme is formed, which can initiate transcription. It depends on Mg(2+) as a cofactor. Zn(2+) is required as a cofactor.

The catalysed reaction is RNA(n) + a ribonucleoside 5'-triphosphate = RNA(n+1) + diphosphate. Functionally, DNA-dependent RNA polymerase catalyzes the transcription of DNA into RNA using the four ribonucleoside triphosphates as substrates. In Methylobacillus flagellatus (strain ATCC 51484 / DSM 6875 / VKM B-1610 / KT), this protein is DNA-directed RNA polymerase subunit beta'.